The following is a 278-amino-acid chain: Phosphate import ATP-binding protein PstB (278 aa).

Residues 32-273 enclose the ABC transporter domain; sequence YETRDLNLWY…PSDKRTEDYI (242 aa). 64–71 contributes to the ATP binding site; the sequence is GPSGCGKS.

Belongs to the ABC transporter superfamily. Phosphate importer (TC 3.A.1.7) family. In terms of assembly, the complex is composed of two ATP-binding proteins (PstB), two transmembrane proteins (PstC and PstA) and a solute-binding protein (PstS).

The protein localises to the cell membrane. The enzyme catalyses phosphate(out) + ATP + H2O = ADP + 2 phosphate(in) + H(+). In terms of biological role, part of the ABC transporter complex PstSACB involved in phosphate import. Responsible for energy coupling to the transport system. This chain is Phosphate import ATP-binding protein PstB, found in Halalkalibacterium halodurans (strain ATCC BAA-125 / DSM 18197 / FERM 7344 / JCM 9153 / C-125) (Bacillus halodurans).